A 545-amino-acid polypeptide reads, in one-letter code: Alpha-galactosidase A (545 aa).

Residues 1–31 (MIQGLESIMNQGTKRILLAATLAATPWQVYG) form the signal peptide. Cys-54 and Cys-86 are disulfide-bonded. N-linked (GlcNAc...) asparagine glycosylation is found at Asn-57, Asn-95, Asn-101, and Asn-131. Cys-134 and Cys-164 form a disulfide bridge. The active-site Nucleophile is Asp-162. Asn-211 carries N-linked (GlcNAc...) asparagine glycosylation. Asp-220 acts as the Proton donor in catalysis. Residues Asn-363 and Asn-444 are each glycosylated (N-linked (GlcNAc...) asparagine). The Ricin B-type lectin domain maps to 421–518 (CSSVVPTGLV…KNAKTDGCLT (98 aa)). Intrachain disulfides connect Cys-438–Cys-452 and Cys-477–Cys-490.

Belongs to the glycosyl hydrolase 27 family. A C-terminal Ser/Thr-rich region may provide possible sites for O-glycosylation.

Its subcellular location is the secreted. It carries out the reaction Hydrolysis of terminal, non-reducing alpha-D-galactose residues in alpha-D-galactosides, including galactose oligosaccharides, galactomannans and galactolipids.. Hydrolyzes a variety of simple alpha-D-galactoside as well as more complex molecules such as oligosaccharides and polysaccharides. The sequence is that of Alpha-galactosidase A (aglA) from Aspergillus niger.